The chain runs to 972 residues: Coatomer subunit beta (972 aa).

HEAT repeat units follow at residues 79–113, 133–170, 317–354, 397–434, and 481–518; these read LLYFYWEIVPKLDQDGKLRHEMILVCNAIQHDLQH, ELLEQMVPSTLACLEYRHAYVRKYAILAVLSIYKVSEH, GCLEELTLDILRVLNAEDIDVRSKALTIAMDLVTSRNI, EIAANIVSLLLDFITDLNSVAANGVIAFVKDVVELYPQ, and RQSIGEIPILQTELKNQRKSQDEDDEATEESATKQAGP. The tract at residues 494-522 is disordered; the sequence is LKNQRKSQDEDDEATEESATKQAGPVILP.

Oligomeric complex that consists of at least the alpha, beta, beta', gamma, delta, epsilon and zeta subunits.

It is found in the cytoplasm. The protein localises to the golgi apparatus membrane. The protein resides in the cytoplasmic vesicle. Its subcellular location is the COPI-coated vesicle membrane. The coatomer is a cytosolic protein complex that binds to dilysine motifs and reversibly associates with Golgi non-clathrin-coated vesicles, which further mediate biosynthetic protein transport from the ER, via the Golgi up to the trans Golgi network. Coatomer complex is required for budding from Golgi membranes, and is essential for the retrograde Golgi-to-ER transport of dilysine-tagged proteins. In Candida glabrata (strain ATCC 2001 / BCRC 20586 / JCM 3761 / NBRC 0622 / NRRL Y-65 / CBS 138) (Yeast), this protein is Coatomer subunit beta.